A 215-amino-acid polypeptide reads, in one-letter code: ATP-dependent Clp protease proteolytic subunit 3 (215 aa).

Catalysis depends on serine 119, which acts as the Nucleophile. Residue histidine 144 is part of the active site.

Belongs to the peptidase S14 family. As to quaternary structure, fourteen ClpP subunits assemble into 2 heptameric rings which stack back to back to give a disk-like structure with a central cavity, resembling the structure of eukaryotic proteasomes.

The protein resides in the cytoplasm. The catalysed reaction is Hydrolysis of proteins to small peptides in the presence of ATP and magnesium. alpha-casein is the usual test substrate. In the absence of ATP, only oligopeptides shorter than five residues are hydrolyzed (such as succinyl-Leu-Tyr-|-NHMec, and Leu-Tyr-Leu-|-Tyr-Trp, in which cleavage of the -Tyr-|-Leu- and -Tyr-|-Trp bonds also occurs).. Functionally, cleaves peptides in various proteins in a process that requires ATP hydrolysis. Has a chymotrypsin-like activity. Plays a major role in the degradation of misfolded proteins. This chain is ATP-dependent Clp protease proteolytic subunit 3, found in Prochlorococcus marinus subsp. pastoris (strain CCMP1986 / NIES-2087 / MED4).